Here is a 400-residue protein sequence, read N- to C-terminus: Peptidase M20 domain-containing protein C757.05c (400 aa).

A signal peptide spans 1-25 (MTMKISVWSLLIVIGYHLWMSPVLA). A glycan (N-linked (GlcNAc...) asparagine) is linked at N80. D152 is a Zn(2+) binding site. E186 serves as the catalytic Proton acceptor. E187 contributes to the Zn(2+) binding site.

This sequence belongs to the peptidase M20A family. Requires Zn(2+) as cofactor.

Its subcellular location is the secreted. In Schizosaccharomyces pombe (strain 972 / ATCC 24843) (Fission yeast), this protein is Peptidase M20 domain-containing protein C757.05c.